Consider the following 457-residue polypeptide: Dynein regulatory complex protein 10 (457 aa).

Coiled-coil stretches lie at residues 101–127 (EKASILQRKQKELEKGEEAEEDWDQER), 209–258 (IQDI…LHQV), and 292–381 (QQDI…AESE). The IQ domain maps to 397–426 (MVRAATLIQAMWKGYLVRSMLRSRKKKRVK). Residues 419–457 (SRKKKRVKSKGKDKGKGKEKPKEEKGKEKKAKGKGKGKK) are disordered. The span at 428 to 445 (KGKDKGKGKEKPKEEKGK) shows a compositional bias: basic and acidic residues. Positions 446 to 457 (EKKAKGKGKGKK) are enriched in basic residues.

Belongs to the DRC10 family. As to quaternary structure, component of the nexin-dynein regulatory complex (N-DRC). Interacts with CFAP52.

The protein resides in the cytoplasm. It is found in the cytoskeleton. Its subcellular location is the flagellum axoneme. Component of the nexin-dynein regulatory complex (N-DRC), a key regulator of ciliary/flagellar motility which maintains the alignment and integrity of the distal axoneme and regulates microtubule sliding in motile axonemes. In Rattus norvegicus (Rat), this protein is Dynein regulatory complex protein 10 (Iqcd).